The primary structure comprises 747 residues: MQGVLRKTLVVAGRDLTLETGRLAKQAGGAVMVSYGGTMVLVTATASEEPREGIDFFPLTVDYEERLYAAGKIPGGFIKREGRPSEKAILSARLIDRPIRPLFPKFYRNDVHVVATVMSVDQDCPPNVAGIIGASAALMLSAIPFAGPIGAVSVGLIDNRPVINPTLEEDSRSSLNLTVAGTANAIMMVEAGAKEVPEDLMLECIMQGHEEIKRIVAFINEFRAEALAMGLAKEKPELVAPQLDPAWESRVREIATPRLREVIYRSRDEKWSKQERDKQLDACREEINNLILEGQEEALAANPELPGLIKELITKIEKEIVRRMILTEGIRVDGRTLEEIRPITCEVGVLSRTHGSGLFTRGETQVLTVTTLGPISDEQILDDLGVDESKRYMHHYNFPPYSVGEARPIRAPGRREIGHGALAERALEPMIPSEEEFPYAIRLVSEVLGSNGSTSMGSVCGSTLSLMDAGVPIKAPVAGVAMGLVKENDQVAILTDIQGLEDALGDMDFKVAGTKKGITALQMDIKIAGIDRSILERALEQARRGRLFILDKILATIPEPRKELSPYAPRMLTITIDPDKIRDIIGPGGKIIKKIIEETGVEIDVEDDGRVFIASTDAAAGERALKIIESLTQDVETGKVYNGKVTRVTDFGAFVEVIPRVLGMPGKEGLVHISQLANERVEKVEDVVQEGDYILVKAIGFDPQGRLKLSRKEALNESTVGEGGHRHFRRAGREGGHRGLNNRRQSR.

The Mg(2+) site is built by Asp-502 and Asp-508. Residues Pro-569–Ile-628 form the KH domain. Residues Gly-638 to Lys-712 form the S1 motif domain. Positions Ser-718–Arg-747 are disordered.

It belongs to the polyribonucleotide nucleotidyltransferase family. Mg(2+) is required as a cofactor.

It localises to the cytoplasm. The catalysed reaction is RNA(n+1) + phosphate = RNA(n) + a ribonucleoside 5'-diphosphate. Its function is as follows. Involved in mRNA degradation. Catalyzes the phosphorolysis of single-stranded polyribonucleotides processively in the 3'- to 5'-direction. The protein is Polyribonucleotide nucleotidyltransferase of Moorella thermoacetica (strain ATCC 39073 / JCM 9320).